Here is a 724-residue protein sequence, read N- to C-terminus: Catalase-peroxidase (724 aa).

Residues 1–26 (MDENKTKPTGKCPVMHGGNTSTGSSN) are disordered. The segment at residues 98–225 (WHSAGSYRTT…LAAVQMGLIY (128 aa)) is a cross-link (tryptophyl-tyrosyl-methioninium (Trp-Tyr) (with M-251)). Residue H99 is the Proton acceptor of the active site. A cross-link (tryptophyl-tyrosyl-methioninium (Tyr-Met) (with W-98)) is located at residues 225-251 (YVNPEGVDGKSDPLRTAQDMRVTFSRM). H266 is a heme b binding site.

It belongs to the peroxidase family. Peroxidase/catalase subfamily. As to quaternary structure, homodimer or homotetramer. Requires heme b as cofactor. Formation of the three residue Trp-Tyr-Met cross-link is important for the catalase, but not the peroxidase activity of the enzyme.

The catalysed reaction is H2O2 + AH2 = A + 2 H2O. The enzyme catalyses 2 H2O2 = O2 + 2 H2O. Bifunctional enzyme with both catalase and broad-spectrum peroxidase activity. This is Catalase-peroxidase from Pectobacterium atrosepticum (strain SCRI 1043 / ATCC BAA-672) (Erwinia carotovora subsp. atroseptica).